A 392-amino-acid polypeptide reads, in one-letter code: Phospho-N-acetylmuramoyl-pentapeptide-transferase (392 aa).

Helical transmembrane passes span 24–44 (YLTLRAVMAALTALLIGLIAG), 76–96 (TMGGVLILGSIAISTLLWFDL), 100–120 (FVWIVLAVTLGFGAIGWVDDW), 137–157 (YFWQSVIGLLAALYLVFSISE), 167–187 (FITWVQSGFLMDLPPKAGLLV), 193–213 (VSYPLGVLGFVILTYLVIVGS), 225–245 (GLAIMPVIMVGASLGIFAYVT), 262–282 (SGELLIFCAAMAGAGLAFLWF), 289–309 (VFMGDVGALALGAALGTIAVI), 314–334 (IVLAIMGGIFVVEALSVMLQV), and 369–389 (QVVVRFWIITMLLCLVGLTTL).

It belongs to the glycosyltransferase 4 family. MraY subfamily. The cofactor is Mg(2+).

The protein localises to the cell inner membrane. It catalyses the reaction UDP-N-acetyl-alpha-D-muramoyl-L-alanyl-gamma-D-glutamyl-meso-2,6-diaminopimeloyl-D-alanyl-D-alanine + di-trans,octa-cis-undecaprenyl phosphate = di-trans,octa-cis-undecaprenyl diphospho-N-acetyl-alpha-D-muramoyl-L-alanyl-D-glutamyl-meso-2,6-diaminopimeloyl-D-alanyl-D-alanine + UMP. Its pathway is cell wall biogenesis; peptidoglycan biosynthesis. Its function is as follows. Catalyzes the initial step of the lipid cycle reactions in the biosynthesis of the cell wall peptidoglycan: transfers peptidoglycan precursor phospho-MurNAc-pentapeptide from UDP-MurNAc-pentapeptide onto the lipid carrier undecaprenyl phosphate, yielding undecaprenyl-pyrophosphoryl-MurNAc-pentapeptide, known as lipid I. The chain is Phospho-N-acetylmuramoyl-pentapeptide-transferase from Acidovorax ebreus (strain TPSY) (Diaphorobacter sp. (strain TPSY)).